The chain runs to 543 residues: CTP synthase (543 aa).

Residues 1 to 265 (MARYIFITGG…DEEVLAAFGI (265 aa)) form an amidoligase domain region. S13 serves as a coordination point for CTP. Position 13 (S13) interacts with UTP. 14-19 (SLGKGL) is an ATP binding site. Y54 provides a ligand contact to L-glutamine. Residue D71 coordinates ATP. Mg(2+) is bound by residues D71 and E139. CTP contacts are provided by residues 146-148 (DIE), 186-191 (KTKPTQ), and K222. UTP contacts are provided by residues 186-191 (KTKPTQ) and K222. 238–240 (RDA) serves as a coordination point for ATP. A Glutamine amidotransferase type-1 domain is found at 291-542 (TIAIVGKYTG…IEAAMAQSRL (252 aa)). G353 provides a ligand contact to L-glutamine. C380 serves as the catalytic Nucleophile; for glutamine hydrolysis. L-glutamine contacts are provided by residues 381 to 384 (FGMQ), E404, and R470. Catalysis depends on residues H515 and E517.

This sequence belongs to the CTP synthase family. In terms of assembly, homotetramer.

It catalyses the reaction UTP + L-glutamine + ATP + H2O = CTP + L-glutamate + ADP + phosphate + 2 H(+). The enzyme catalyses L-glutamine + H2O = L-glutamate + NH4(+). The catalysed reaction is UTP + NH4(+) + ATP = CTP + ADP + phosphate + 2 H(+). Its pathway is pyrimidine metabolism; CTP biosynthesis via de novo pathway; CTP from UDP: step 2/2. With respect to regulation, allosterically activated by GTP, when glutamine is the substrate; GTP has no effect on the reaction when ammonia is the substrate. The allosteric effector GTP functions by stabilizing the protein conformation that binds the tetrahedral intermediate(s) formed during glutamine hydrolysis. Inhibited by the product CTP, via allosteric rather than competitive inhibition. Functionally, catalyzes the ATP-dependent amination of UTP to CTP with either L-glutamine or ammonia as the source of nitrogen. Regulates intracellular CTP levels through interactions with the four ribonucleotide triphosphates. The chain is CTP synthase from Rhodopseudomonas palustris (strain BisA53).